Reading from the N-terminus, the 301-residue chain is Protease HtpX (301 aa).

The next 2 membrane-spanning stretches (helical) occupy residues 4–24 (IGLF…ILSL) and 38–58 (LGNL…ISLL). His147 is a binding site for Zn(2+). Glu148 is a catalytic residue. His151 provides a ligand contact to Zn(2+). 2 helical membrane passes run 155–175 (GDMV…MFFA) and 200–220 (FAIT…IVMW). Glu226 is a Zn(2+) binding site.

The protein belongs to the peptidase M48B family. Zn(2+) serves as cofactor.

Its subcellular location is the cell inner membrane. This Acinetobacter baylyi (strain ATCC 33305 / BD413 / ADP1) protein is Protease HtpX.